A 682-amino-acid polypeptide reads, in one-letter code: DNA ligase (682 aa).

NAD(+) is bound by residues 42-46, 88-89, and Glu121; these read DAAYD and SL. Lys123 (N6-AMP-lysine intermediate) is an active-site residue. The NAD(+) site is built by Arg144, Glu180, Lys291, and Lys315. Zn(2+)-binding residues include Cys409, Cys412, Cys427, and Cys433. The region spanning 601–682 is the BRCT domain; that stretch reads AAGGALAGKT…FRSLAGLPPG (82 aa).

It belongs to the NAD-dependent DNA ligase family. LigA subfamily. Mg(2+) serves as cofactor. The cofactor is Mn(2+).

The catalysed reaction is NAD(+) + (deoxyribonucleotide)n-3'-hydroxyl + 5'-phospho-(deoxyribonucleotide)m = (deoxyribonucleotide)n+m + AMP + beta-nicotinamide D-nucleotide.. DNA ligase that catalyzes the formation of phosphodiester linkages between 5'-phosphoryl and 3'-hydroxyl groups in double-stranded DNA using NAD as a coenzyme and as the energy source for the reaction. It is essential for DNA replication and repair of damaged DNA. This chain is DNA ligase, found in Acidiphilium cryptum (strain JF-5).